The primary structure comprises 181 residues: Protein Syd (181 aa).

The protein belongs to the Syd family.

It is found in the cell inner membrane. Interacts with the SecY protein in vivo. May bind preferentially to an uncomplexed state of SecY, thus functioning either as a chelating agent for excess SecY in the cell or as a regulatory factor that negatively controls the translocase function. This is Protein Syd from Salmonella agona (strain SL483).